The following is a 200-amino-acid chain: Chromophore lyase CpcS/CpeS (200 aa).

This sequence belongs to the CpcS/CpeS biliprotein lyase family.

In terms of biological role, covalently attaches a chromophore to Cys residue(s) of phycobiliproteins. The polypeptide is Chromophore lyase CpcS/CpeS (Synechococcus sp. (strain WH8020)).